A 530-amino-acid polypeptide reads, in one-letter code: ATP synthase subunit alpha 3 (530 aa).

Position 174 to 181 (174 to 181 (GDRATGKT)) interacts with ATP. The segment covering 507-522 (TASATAPPDPPAASAA) has biased composition (low complexity). The interval 507-530 (TASATAPPDPPAASAAELPQPDSP) is disordered.

It belongs to the ATPase alpha/beta chains family. As to quaternary structure, F-type ATPases have 2 components, CF(1) - the catalytic core - and CF(0) - the membrane proton channel. CF(1) has five subunits: alpha(3), beta(3), gamma(1), delta(1), epsilon(1). CF(0) has three main subunits: a(1), b(2) and c(9-12). The alpha and beta chains form an alternating ring which encloses part of the gamma chain. CF(1) is attached to CF(0) by a central stalk formed by the gamma and epsilon chains, while a peripheral stalk is formed by the delta and b chains.

It is found in the cell inner membrane. The catalysed reaction is ATP + H2O + 4 H(+)(in) = ADP + phosphate + 5 H(+)(out). Its function is as follows. Produces ATP from ADP in the presence of a proton gradient across the membrane. The alpha chain is a regulatory subunit. The sequence is that of ATP synthase subunit alpha 3 from Paraburkholderia xenovorans (strain LB400).